We begin with the raw amino-acid sequence, 718 residues long: Cyclomaltodextrin glucanotransferase (718 aa).

Positions 1–34 (MFQMAKRAFLSTTLTLGLLAGSALPFLPASAVYA) are cleaved as a signal peptide. The A1 stretch occupies residues 35–172 (DPDTAVTNKQ…GIKIVIDFAP (138 aa)). Ca(2+) contacts are provided by Asp-61, Asn-63, Asn-66, and Asn-67. A disulfide bridge links Cys-77 with Cys-84. 2 residues coordinate Ca(2+): Gly-85 and Asp-87. A substrate-binding site is contributed by 134 to 135 (YW). Asn-173 lines the Ca(2+) pocket. The b stretch occupies residues 173–236 (NHTSPAMETD…NLYDLADFNH (64 aa)). His-174 lines the substrate pocket. Ile-224 provides a ligand contact to Ca(2+). Substrate contacts are provided by residues 227-230 (NLYD) and Asp-230. Asp-233 contacts Ca(2+). Residues 237-440 (NNATIDKYFK…LRKSNPAIAY (204 aa)) form an A2 region. Arg-261 is a binding site for substrate. Asp-263 serves as the catalytic Nucleophile. Residues 266–267 (KH) and His-267 each bind substrate. His-267 lines the Ca(2+) pocket. Glu-291 serves as the catalytic Proton donor. Substrate-binding residues include His-361, Asp-405, and Arg-409. The tract at residues 441–528 (GSTQQRWINN…ATAVWQYTTA (88 aa)) is c. The segment at 529 to 614 (ETTPTIGHVG…SNAYNNFTIL (86 aa)) is d. The IPT/TIG domain maps to 532 to 612 (PTIGHVGPVM…VNSNAYNNFT (81 aa)). The CBM20 domain maps to 613-718 (ILTGDQVTVR…GTATVTVNWQ (106 aa)). The segment at 615-718 (TGDQVTVRFV…GTATVTVNWQ (104 aa)) is e.

It belongs to the glycosyl hydrolase 13 family. Monomer. The cofactor is Ca(2+).

Its subcellular location is the secreted. The catalysed reaction is Cyclizes part of a (1-&gt;4)-alpha-D-glucan chain by formation of a (1-&gt;4)-alpha-D-glucosidic bond.. The protein is Cyclomaltodextrin glucanotransferase of Niallia circulans (Bacillus circulans).